An 860-amino-acid polypeptide reads, in one-letter code: Valine--tRNA ligase (860 aa).

The short motif at 53-63 (PNLTGILHIGH) is the 'HIGH' region element. The 'KMSKS' region signature appears at 527 to 531 (KMSKS). Lys530 is a binding site for ATP. The stretch at 794 to 860 (QDKTKIVDKL…LKQDKLNSLK (67 aa)) forms a coiled coil.

This sequence belongs to the class-I aminoacyl-tRNA synthetase family. ValS type 1 subfamily. In terms of assembly, monomer.

It is found in the cytoplasm. The catalysed reaction is tRNA(Val) + L-valine + ATP = L-valyl-tRNA(Val) + AMP + diphosphate. Functionally, catalyzes the attachment of valine to tRNA(Val). As ValRS can inadvertently accommodate and process structurally similar amino acids such as threonine, to avoid such errors, it has a 'posttransfer' editing activity that hydrolyzes mischarged Thr-tRNA(Val) in a tRNA-dependent manner. This Mycoplasmoides gallisepticum (strain R(low / passage 15 / clone 2)) (Mycoplasma gallisepticum) protein is Valine--tRNA ligase.